A 614-amino-acid chain; its full sequence is Glutamine--fructose-6-phosphate aminotransferase [isomerizing] (614 aa).

C2 acts as the Nucleophile; for GATase activity in catalysis. The Glutamine amidotransferase type-2 domain occupies 2–221 (CGIVGYIGKR…DGEIAVINRG (220 aa)). 2 SIS domains span residues 291-430 (YKEK…EKGT) and 463-604 (LSKT…VDQP). K609 functions as the For Fru-6P isomerization activity in the catalytic mechanism.

As to quaternary structure, homodimer.

It is found in the cytoplasm. It carries out the reaction D-fructose 6-phosphate + L-glutamine = D-glucosamine 6-phosphate + L-glutamate. Its function is as follows. Catalyzes the first step in hexosamine metabolism, converting fructose-6P into glucosamine-6P using glutamine as a nitrogen source. This Bacteroides thetaiotaomicron (strain ATCC 29148 / DSM 2079 / JCM 5827 / CCUG 10774 / NCTC 10582 / VPI-5482 / E50) protein is Glutamine--fructose-6-phosphate aminotransferase [isomerizing].